Reading from the N-terminus, the 126-residue chain is Aspartate 1-decarboxylase (126 aa).

Catalysis depends on serine 25, which acts as the Schiff-base intermediate with substrate; via pyruvic acid. Residue serine 25 is modified to Pyruvic acid (Ser). Residue threonine 57 participates in substrate binding. Residue tyrosine 58 is the Proton donor of the active site. Residue 73–75 coordinates substrate; it reads GAA.

Belongs to the PanD family. In terms of assembly, heterooctamer of four alpha and four beta subunits. The cofactor is pyruvate. In terms of processing, is synthesized initially as an inactive proenzyme, which is activated by self-cleavage at a specific serine bond to produce a beta-subunit with a hydroxyl group at its C-terminus and an alpha-subunit with a pyruvoyl group at its N-terminus.

The protein resides in the cytoplasm. The catalysed reaction is L-aspartate + H(+) = beta-alanine + CO2. It functions in the pathway cofactor biosynthesis; (R)-pantothenate biosynthesis; beta-alanine from L-aspartate: step 1/1. Its function is as follows. Catalyzes the pyruvoyl-dependent decarboxylation of aspartate to produce beta-alanine. The chain is Aspartate 1-decarboxylase from Marinomonas sp. (strain MWYL1).